We begin with the raw amino-acid sequence, 698 residues long: Polyribonucleotide nucleotidyltransferase (698 aa).

2 residues coordinate Mg(2+): Asp485 and Asp491. The 60-residue stretch at 552–611 (PRIHTIKINTDKIRDVIGKGGAVIRSLCEETGTTIEIEDDGTVKIAATSGEQADDAINRI) folds into the KH domain. An S1 motif domain is found at 621-689 (GTIYTGKVVR…RQGRVRLSIK (69 aa)).

The protein belongs to the polyribonucleotide nucleotidyltransferase family. As to quaternary structure, component of the RNA degradosome, which is a multiprotein complex involved in RNA processing and mRNA degradation. Requires Mg(2+) as cofactor.

Its subcellular location is the cytoplasm. It catalyses the reaction RNA(n+1) + phosphate = RNA(n) + a ribonucleoside 5'-diphosphate. In terms of biological role, involved in mRNA degradation. Catalyzes the phosphorolysis of single-stranded polyribonucleotides processively in the 3'- to 5'-direction. The chain is Polyribonucleotide nucleotidyltransferase from Psychromonas ingrahamii (strain DSM 17664 / CCUG 51855 / 37).